The chain runs to 468 residues: 6-phosphogluconate dehydrogenase, decarboxylating (468 aa).

NADP(+)-binding positions include 9–14, 32–34, 73–75, and asparagine 101; these read GLAVMG, NRS, and VKA. Substrate contacts are provided by residues asparagine 101 and 127-129; that span reads SGG. Lysine 182 (proton acceptor) is an active-site residue. 185 to 186 is a binding site for substrate; it reads HN. The Proton donor role is filled by glutamate 189. 5 residues coordinate substrate: tyrosine 190, lysine 259, arginine 286, arginine 444, and histidine 450.

Belongs to the 6-phosphogluconate dehydrogenase family. As to quaternary structure, homodimer.

It catalyses the reaction 6-phospho-D-gluconate + NADP(+) = D-ribulose 5-phosphate + CO2 + NADPH. It participates in carbohydrate degradation; pentose phosphate pathway; D-ribulose 5-phosphate from D-glucose 6-phosphate (oxidative stage): step 3/3. Functionally, catalyzes the oxidative decarboxylation of 6-phosphogluconate to ribulose 5-phosphate and CO(2), with concomitant reduction of NADP to NADPH. This Staphylococcus epidermidis (strain ATCC 35984 / DSM 28319 / BCRC 17069 / CCUG 31568 / BM 3577 / RP62A) protein is 6-phosphogluconate dehydrogenase, decarboxylating (gnd).